Here is a 253-residue protein sequence, read N- to C-terminus: 5'/3'-nucleotidase SurE (253 aa).

D8, D9, S39, and N92 together coordinate a divalent metal cation.

It belongs to the SurE nucleotidase family. It depends on a divalent metal cation as a cofactor.

It is found in the cytoplasm. The enzyme catalyses a ribonucleoside 5'-phosphate + H2O = a ribonucleoside + phosphate. The catalysed reaction is a ribonucleoside 3'-phosphate + H2O = a ribonucleoside + phosphate. It carries out the reaction [phosphate](n) + H2O = [phosphate](n-1) + phosphate + H(+). Functionally, nucleotidase with a broad substrate specificity as it can dephosphorylate various ribo- and deoxyribonucleoside 5'-monophosphates and ribonucleoside 3'-monophosphates with highest affinity to 3'-AMP. Also hydrolyzes polyphosphate (exopolyphosphatase activity) with the preference for short-chain-length substrates (P20-25). Might be involved in the regulation of dNTP and NTP pools, and in the turnover of 3'-mononucleotides produced by numerous intracellular RNases (T1, T2, and F) during the degradation of various RNAs. In Salmonella paratyphi A (strain AKU_12601), this protein is 5'/3'-nucleotidase SurE.